The primary structure comprises 511 residues: Ribonuclease E/G-like protein (511 aa).

The region spanning 35–117 (SDIYLGTVDK…LTANITLSGR (83 aa)) is the S1 motif domain. Residues D296 and D339 each coordinate Mg(2+).

Belongs to the RNase E/G family. Mg(2+) serves as cofactor.

The protein resides in the plastid. It is found in the chloroplast stroma. Its function is as follows. Involved in intercistronic processing of primary transcripts from chloroplast operons. The endonucleolytic activity of the enzyme depends on the number of phosphates at the 5' end, is inhibited by structured RNA, and preferentially cleaves A/U-rich sequences. The chain is Ribonuclease E/G-like protein (rne) from Porphyra purpurea (Red seaweed).